A 369-amino-acid polypeptide reads, in one-letter code: Maltose/maltodextrin import ATP-binding protein MalK (369 aa).

Positions 4 to 234 (VQLRNVTKAW…PADRFVAGFI (231 aa)) constitute an ABC transporter domain. ATP is bound at residue 36 to 43 (GPSGCGKS).

This sequence belongs to the ABC transporter superfamily. Maltooligosaccharide importer (TC 3.A.1.1.1) family. As to quaternary structure, the complex is composed of two ATP-binding proteins (MalK), two transmembrane proteins (MalG and MalK) and a solute-binding protein (MalE).

The protein localises to the cell inner membrane. It catalyses the reaction D-maltose(out) + ATP + H2O = D-maltose(in) + ADP + phosphate + H(+). In terms of biological role, part of the ABC transporter complex MalEFGK involved in maltose/maltodextrin import. Responsible for energy coupling to the transport system. In Salmonella choleraesuis (strain SC-B67), this protein is Maltose/maltodextrin import ATP-binding protein MalK.